Here is a 316-residue protein sequence, read N- to C-terminus: Protoheme IX farnesyltransferase (316 aa).

The segment at methionine 1–threonine 21 is disordered. Positions proline 11–threonine 21 are enriched in polar residues. 9 consecutive transmembrane segments (helical) span residues valine 42–proline 62, valine 67–valine 87, valine 115–leucine 135, threonine 136–lysine 156, isoleucine 163–glycine 183, alanine 189–isoleucine 209, methionine 235–methionine 255, serine 256–leucine 276, and isoleucine 295–methionine 315.

It belongs to the UbiA prenyltransferase family. Protoheme IX farnesyltransferase subfamily.

It is found in the cell inner membrane. The catalysed reaction is heme b + (2E,6E)-farnesyl diphosphate + H2O = Fe(II)-heme o + diphosphate. It functions in the pathway porphyrin-containing compound metabolism; heme O biosynthesis; heme O from protoheme: step 1/1. In terms of biological role, converts heme B (protoheme IX) to heme O by substitution of the vinyl group on carbon 2 of heme B porphyrin ring with a hydroxyethyl farnesyl side group. This is Protoheme IX farnesyltransferase from Photobacterium profundum (strain SS9).